We begin with the raw amino-acid sequence, 94 residues long: MNIKPLGDKVVIKKVEAEDKTKSGIVLPGSAKEQPQMAEVVAVGPGGVVEGKEIIMELKVGDKVIFSKYAGTEVKLDGEEYTILRQNDILAVVE.

The protein belongs to the GroES chaperonin family. As to quaternary structure, heptamer of 7 subunits arranged in a ring. Interacts with the chaperonin GroEL.

The protein resides in the cytoplasm. Together with the chaperonin GroEL, plays an essential role in assisting protein folding. The GroEL-GroES system forms a nano-cage that allows encapsulation of the non-native substrate proteins and provides a physical environment optimized to promote and accelerate protein folding. GroES binds to the apical surface of the GroEL ring, thereby capping the opening of the GroEL channel. This chain is Co-chaperonin GroES, found in Alkaliphilus metalliredigens (strain QYMF).